The following is a 281-amino-acid chain: Cardosin-F (281 aa).

One can recognise a Peptidase A1 domain in the interval 18-278 (YYGEIGIGTP…DYGNLLVGFA (261 aa)). Residue Asp36 is part of the active site. Cys181 and Cys185 are disulfide-bonded. Residue Asp190 is part of the active site. N-linked (GlcNAc...) asparagine glycosylation occurs at Asn213.

The protein belongs to the peptidase A1 family. In terms of assembly, heterodimer of a light chain and a heavy chain. An intermediate form is produced first, and undergoes proteolytic processing to remove the internal plant-specific insert (PSI) and the propeptide. Post-translationally, N-glycosylated. As to expression, pistils.

It localises to the microsome membrane. The protein localises to the protein storage vacuole. Its subcellular location is the secreted. It is found in the cell wall. The protein resides in the extracellular space. It localises to the extracellular matrix. With respect to regulation, inhibited by pepstatin. Functionally, aspartic protease with a high preference for bonds between hydrophobic residues. The chain is Cardosin-F from Cynara cardunculus (Cardoon).